A 260-amino-acid chain; its full sequence is Methylthioribulose-1-phosphate dehydratase (260 aa).

The segment at 1–26 is disordered; sequence MTPPTTGLPAENTTDDNDHLVQSDDP. Positions 16–26 are enriched in basic and acidic residues; it reads DNDHLVQSDDP. C109 lines the substrate pocket. Residues H127 and H129 each coordinate Zn(2+). The active-site Proton donor/acceptor is the E154. A Zn(2+)-binding site is contributed by H211.

Belongs to the aldolase class II family. MtnB subfamily. Requires Zn(2+) as cofactor.

It localises to the cytoplasm. It catalyses the reaction 5-(methylsulfanyl)-D-ribulose 1-phosphate = 5-methylsulfanyl-2,3-dioxopentyl phosphate + H2O. Its pathway is amino-acid biosynthesis; L-methionine biosynthesis via salvage pathway; L-methionine from S-methyl-5-thio-alpha-D-ribose 1-phosphate: step 2/6. In terms of biological role, catalyzes the dehydration of methylthioribulose-1-phosphate (MTRu-1-P) into 2,3-diketo-5-methylthiopentyl-1-phosphate (DK-MTP-1-P). The chain is Methylthioribulose-1-phosphate dehydratase from Podospora anserina (strain S / ATCC MYA-4624 / DSM 980 / FGSC 10383) (Pleurage anserina).